The chain runs to 246 residues: Mediator of RNA polymerase II transcription subunit 6 (246 aa).

Residues 193–246 (VQLKPGEKPVPVDQTKKEAEPIPETVKPEEKETTKNVQQTVSAKGPPEKRMRLQ) are disordered. The span at 206-226 (QTKKEAEPIPETVKPEEKETT) shows a compositional bias: basic and acidic residues. A Glycyl lysine isopeptide (Lys-Gly) (interchain with G-Cter in SUMO2) cross-link involves residue K208. 2 positions are modified to N6-acetyllysine: K236 and K241.

This sequence belongs to the Mediator complex subunit 6 family. As to quaternary structure, component of the Mediator complex, which is composed of MED1, MED4, MED6, MED7, MED8, MED9, MED10, MED11, MED12, MED13, MED13L, MED14, MED15, MED16, MED17, MED18, MED19, MED20, MED21, MED22, MED23, MED24, MED25, MED26, MED27, MED29, MED30, MED31, CCNC, CDK8 and CDC2L6/CDK11. The MED12, MED13, CCNC and CDK8 subunits form a distinct module termed the CDK8 module. Mediator containing the CDK8 module is less active than Mediator lacking this module in supporting transcriptional activation. Individual preparations of the Mediator complex lacking one or more distinct subunits have been variously termed ARC, CRSP, DRIP, PC2, SMCC and TRAP. Interacts with CTNNB1 and GLI3.

Its subcellular location is the nucleus. Functionally, component of the Mediator complex, a coactivator involved in the regulated transcription of nearly all RNA polymerase II-dependent genes. Mediator functions as a bridge to convey information from gene-specific regulatory proteins to the basal RNA polymerase II transcription machinery. Mediator is recruited to promoters by direct interactions with regulatory proteins and serves as a scaffold for the assembly of a functional preinitiation complex with RNA polymerase II and the general transcription factors. This chain is Mediator of RNA polymerase II transcription subunit 6 (MED6), found in Homo sapiens (Human).